Consider the following 106-residue polypeptide: Iron-sulfur cluster assembly protein CyaY (106 aa).

The protein belongs to the frataxin family.

In terms of biological role, involved in iron-sulfur (Fe-S) cluster assembly. May act as a regulator of Fe-S biogenesis. The chain is Iron-sulfur cluster assembly protein CyaY from Yersinia pseudotuberculosis serotype O:3 (strain YPIII).